Reading from the N-terminus, the 89-residue chain is MANHKSAKKMIKVIAKRTLINKMRKSKTRTAIRNLVDIIKSGDKENVVLAFRNAESNLHKCVNKGVIHRNTAARKISRLNAKVKALMTA.

This sequence belongs to the bacterial ribosomal protein bS20 family.

Its function is as follows. Binds directly to 16S ribosomal RNA. The polypeptide is Small ribosomal subunit protein bS20 (Wolbachia pipientis wMel).